The chain runs to 227 residues: Prolactin (227 aa).

An N-terminal signal peptide occupies residues 1–28; that stretch reads MDSKWSRRTGSLLLLLVSNLLLCKSTAS. Cysteine 32 and cysteine 39 are oxidised to a cystine. Phosphoserine is present on residues serine 54, serine 62, and serine 118. Disulfide bonds link cysteine 86-cysteine 202 and cysteine 219-cysteine 227.

This sequence belongs to the somatotropin/prolactin family. As to quaternary structure, interacts with PRLR.

It is found in the secreted. In terms of biological role, prolactin acts primarily on the mammary gland by promoting lactation. This chain is Prolactin (PRL), found in Oryctolagus cuniculus (Rabbit).